The following is a 359-amino-acid chain: Peptide chain release factor 1 (359 aa).

Gln-236 carries the post-translational modification N5-methylglutamine.

Belongs to the prokaryotic/mitochondrial release factor family. Post-translationally, methylated by PrmC. Methylation increases the termination efficiency of RF1.

The protein resides in the cytoplasm. In terms of biological role, peptide chain release factor 1 directs the termination of translation in response to the peptide chain termination codons UAG and UAA. The chain is Peptide chain release factor 1 from Streptococcus pneumoniae (strain Taiwan19F-14).